The following is a 233-amino-acid chain: Homeobox protein ceh-30 (233 aa).

Positions 50-85 (NNSTYSHDLDPSPQSVRSDLSTSPRASSPDRNSPMS) are enriched in polar residues. 2 disordered regions span residues 50 to 93 (NNST…KART) and 206 to 233 (FQAT…SNSD). The segment at residues 88 to 147 (SRKARTIFTDKQLQELENTFEKQKYLSVQDRMDLAHRMGLSDTQVKTWYQNRRTKWKRQA) is a DNA-binding region (homeobox). Polar residues predominate over residues 224–233 (PQLDVSSNSD).

The protein resides in the nucleus. In terms of biological role, cell-type specific anti-apoptotic transcription factor required for the sexually dimorphic survival of the male-specific CEM (cephalic male) sensory neurons during sex determination. In hermaphrodites, the homologous cells undergo programmed cell death due to transcriptional repression of ceh-30 by tra-1, the terminal regulator in the sex determination pathway. This Caenorhabditis briggsae protein is Homeobox protein ceh-30.